Consider the following 244-residue polypeptide: MKVIIVEDEFLAQQELSWLIKEHSQMEIVGTFDDGLDVLKFLQHNRVDAIFLDINIPSLDGVLLAQNISQFAHKPFIVFITAWKEHAVEAFELEAFDYILKPYQESRITGMLQKLEAAWQQQQTSSTPAATVTRENDTINLVKDERIIVTPINDIYYAEAHEKMTFVYTRRESYVMPMNITEFCSKLPPSHFFRCHRSFCVNLNKIREIEPWFNNTYILRLKDLDFEVPVSRSKVKEFRQLMHL.

The 115-residue stretch at 2 to 116 folds into the Response regulatory domain; sequence KVIIVEDEFL…RITGMLQKLE (115 aa). D53 carries the 4-aspartylphosphate modification. The HTH LytTR-type domain maps to 139 to 244; the sequence is INLVKDERII…VKEFRQLMHL (106 aa).

In terms of processing, phosphorylated by YpdA.

It localises to the cytoplasm. Functionally, member of the two-component regulatory system YpdA/YpdB. YpdB regulates expression of yhjX by binding to its promoter region. This is Transcriptional regulatory protein YpdB (ypdB) from Escherichia coli O157:H7.